We begin with the raw amino-acid sequence, 418 residues long: MQALVLLLCIGALLGHSSCQNPASPPEEGSPDPDSTGALVEEEDPFFKVPVNKLAAAVSNFGYDLYRVRSSTSPTTNVLLSPLSVATALSALSLGAEQRTESIIHRALYYDLISSPDIHGTYKELLDTVTAPQKNLKSASRIVFEKKLRIKSSFVAPLEKSYGTRPRVLTGNPRLDLQEINNWVQAQMKGKLARSTKEIPDEISILLLGVAHFKGQWVTKFDSRKTSLEDFYLDEERTVRVPMMSDPKAVLRYGLDSDLSCKIAQLPLTGSMSIIFFLPLKVTQNLTLIEESLTSEFIHDIDRELKTVQAVLTVPKLKLSYEGEVTKSLQEMKLQSLFDSPDFSKITGKPIKLTQVEHRAGFEWNEDGAGTTPSPGLQPAHLTFPLDYHLNQPFIFVLRDTDTGALLFIGKILDPRGP.

The first 19 residues, 1–19, serve as a signal peptide directing secretion; that stretch reads MQALVLLLCIGALLGHSSC. Pyrrolidone carboxylic acid is present on Gln-20. The tract at residues 20–39 is disordered; the sequence is QNPASPPEEGSPDPDSTGAL. A phosphoserine; by CK2 mark is found at Ser-24 and Ser-114. Phosphoserine; by PKA is present on Ser-227. A glycan (N-linked (GlcNAc...) (complex) asparagine) is linked at Asn-285. The segment at 371–383 is O-glycosylated at one site; it reads TTPSPGLQPAHLT.

It belongs to the serpin family. Interacts with PNPLA2; this interaction stimulates the phospholipase A2 activity of PNPLA2. The N-terminus is blocked. Extracellular phosphorylation enhances antiangiogenic activity. In terms of processing, N- and O-glycosylated. O-glycosylated with a core 1 or possibly core 8 glycan. In terms of tissue distribution, retinal pigment epithelial cells and blood plasma.

The protein localises to the secreted. It is found in the melanosome. Functionally, neurotrophic protein; induces extensive neuronal differentiation in retinoblastoma cells. Potent inhibitor of angiogenesis. As it does not undergo the S (stressed) to R (relaxed) conformational transition characteristic of active serpins, it exhibits no serine protease inhibitory activity. This is Pigment epithelium-derived factor (SERPINF1) from Homo sapiens (Human).